A 158-amino-acid chain; its full sequence is MNQCDYLLFLKQLPMFNEVPLSIVETLLKNGTFIRGSCDQSPSFLHSQSVYIVLKGSVRFMDTRLPEGSKTVALWEKGDVFPIDEKGGLYLSPFISVNATSDILILNIPYYIFKKMMSYHPQLQMNFLAMLQQNVFCSYQLFLRYLHTSQDENAEPGS.

Activates, in anaerobic conditions, the transcription of the fermentative operons lctEP and alsDS, of the hmp gene encoding a flavohemoglobin-like protein, the nitrite reductase operon nasDE and the heme biosynthesis genes hemN and hemZ. In Bacillus subtilis (strain 168), this protein is Probable transcription regulator ArfM (arfM).